Here is a 364-residue protein sequence, read N- to C-terminus: Developmentally-regulated GTP-binding protein 2 (364 aa).

Position 21 is a (3S)-3-hydroxylysine (lysine 21). One can recognise an OBG-type G domain in the interval 63–288 (ARVALIGFPS…LLEMLWEYLA (226 aa)). Residues 69–76 (GFPSVGKS), 94–98 (FTTLT), 115–118 (DLPG), 246–249 (NKID), and 269–271 (SCG) contribute to the GTP site. Mg(2+) is bound by residues serine 76 and threonine 96. The 76-residue stretch at 288–363 (ALTCIYTKKR…EHEDVIQIVK (76 aa)) folds into the TGS domain.

This sequence belongs to the TRAFAC class OBG-HflX-like GTPase superfamily. OBG GTPase family. Interacts with RWDD1; this interaction confers protection to polyubiquitination and proteolytic degradation. Interacts with JMJD7; this interaction is direct. Mg(2+) serves as cofactor. Hydroxylated (with S stereochemistry) at C-3 of Lys-21 by JMJD7; this modification hinders trypsin-catalyzed proteolysis in vitro. Post-translationally, polyubiquitinated. As to expression, highest levels in skeletal muscle, heart and kidney. Low levels in colon, thymus, spleen, small intestine, lung and Leukocytes.

It localises to the nucleus. The protein resides in the cytoplasm. It carries out the reaction GTP + H2O = GDP + phosphate + H(+). Its function is as follows. Catalyzes the conversion of GTP to GDP through hydrolysis of the gamma-phosphate bond in GTP. When hydroxylated at C-3 of 'Lys-21' by JMJD7, may bind to RNA and play a role in translation. The chain is Developmentally-regulated GTP-binding protein 2 from Homo sapiens (Human).